A 141-amino-acid polypeptide reads, in one-letter code: MLSADDKKIIAQLWEKVAGHQDEFGNEALQRMFVTYPQTKTYFPHFDVHPGSEQVRSHGKKVAAALGNAVKSLDNISQALSELSNLHAYNLRVDPANFKLLSQCFQVVLAVHLGKDYTPEMHAAFDKFLSAVAAVLAEKYR.

The Globin domain occupies 1–141 (MLSADDKKII…VAAVLAEKYR (141 aa)). Residues histidine 58 and histidine 87 each contribute to the heme b site.

The protein belongs to the globin family. As to quaternary structure, heterotetramer of two alpha-D chains and two beta chains. As to expression, red blood cells.

Functionally, involved in oxygen transport from the lung to the various peripheral tissues. This chain is Hemoglobin subunit alpha-D (HBAD), found in Anser indicus (Bar-headed goose).